The sequence spans 491 residues: 2,3-bisphosphoglycerate-independent phosphoglycerate mutase (491 aa).

Mn(2+)-binding residues include Asp11 and Ser61. Catalysis depends on Ser61, which acts as the Phosphoserine intermediate. Substrate is bound by residues His118, 147-148 (RD), Arg177, Arg183, 247-250 (RNDR), and Lys320. Asp386, His390, Asp427, His428, and His445 together coordinate Mn(2+).

It belongs to the BPG-independent phosphoglycerate mutase family. In terms of assembly, monomer. Mn(2+) serves as cofactor.

The catalysed reaction is (2R)-2-phosphoglycerate = (2R)-3-phosphoglycerate. Its pathway is carbohydrate degradation; glycolysis; pyruvate from D-glyceraldehyde 3-phosphate: step 3/5. In terms of biological role, catalyzes the interconversion of 2-phosphoglycerate and 3-phosphoglycerate. This chain is 2,3-bisphosphoglycerate-independent phosphoglycerate mutase, found in Helicobacter pylori (strain ATCC 700392 / 26695) (Campylobacter pylori).